We begin with the raw amino-acid sequence, 433 residues long: Serine/threonine-protein kinase DCLK1 (433 aa).

The segment at 1–74 is disordered; sequence MLELIEVNGT…GEEESDEGFQ (74 aa). 10 positions are modified to phosphoserine: S23, S25, S27, S30, S40, S45, S46, S48, S57, and S69. Over residues 40–57 the composition is skewed to low complexity; the sequence is SQHGGSSTSLSSTKVCSS. Positions 59 to 71 are enriched in acidic residues; sequence DENDGPGEEESDE. Residues 83–340 form the Protein kinase domain; it reads YKVGRTIGDG…AVQVLEHPWV (258 aa). Residues 89–97 and K112 each bind ATP; that span reads IGDGNFAVV. The Proton acceptor role is filled by D204. Position 213 is a phosphotyrosine (Y213). Basic and acidic residues predominate over residues 388-400; it reads QVFRRRRNQDVRG. The disordered stretch occupies residues 388 to 433; that stretch reads QVFRRRRNQDVRGRYKAQPAPPELNSESEDYSPSSSETVRSPNSPF. Residues S419, S428, and S431 each carry the phosphoserine modification.

It belongs to the protein kinase superfamily. CAMK Ser/Thr protein kinase family. CaMK subfamily.

It catalyses the reaction L-seryl-[protein] + ATP = O-phospho-L-seryl-[protein] + ADP + H(+). The catalysed reaction is L-threonyl-[protein] + ATP = O-phospho-L-threonyl-[protein] + ADP + H(+). In terms of biological role, probable kinase that may be involved in a calcium-signaling pathway controlling neuronal migration in the developing brain. May also participate in functions of the mature nervous system. This chain is Serine/threonine-protein kinase DCLK1 (Dclk1), found in Rattus norvegicus (Rat).